The chain runs to 409 residues: Peptidase T (409 aa).

His-78 lines the Zn(2+) pocket. Residue Asp-80 is part of the active site. Residue Asp-140 coordinates Zn(2+). Catalysis depends on Glu-173, which acts as the Proton acceptor. Residues Glu-174, Asp-196, and His-379 each coordinate Zn(2+).

It belongs to the peptidase M20B family. Requires Zn(2+) as cofactor.

The protein resides in the cytoplasm. The enzyme catalyses Release of the N-terminal residue from a tripeptide.. In terms of biological role, cleaves the N-terminal amino acid of tripeptides. This is Peptidase T from Salmonella heidelberg (strain SL476).